A 177-amino-acid chain; its full sequence is uncharacterized protein (177 aa).

This is an uncharacterized protein from Grapevine virus A (isolate Is 151) (GVA).